The sequence spans 690 residues: Elongation factor G (690 aa).

In terms of domain architecture, tr-type G spans 8–283 (ERYRNFGIMA…AVVDFMPSPL (276 aa)). Residues 17-24 (AHIDAGKT), 81-85 (DTPGH), and 135-138 (NKLD) each bind GTP.

The protein belongs to the TRAFAC class translation factor GTPase superfamily. Classic translation factor GTPase family. EF-G/EF-2 subfamily.

The protein localises to the cytoplasm. In terms of biological role, catalyzes the GTP-dependent ribosomal translocation step during translation elongation. During this step, the ribosome changes from the pre-translocational (PRE) to the post-translocational (POST) state as the newly formed A-site-bound peptidyl-tRNA and P-site-bound deacylated tRNA move to the P and E sites, respectively. Catalyzes the coordinated movement of the two tRNA molecules, the mRNA and conformational changes in the ribosome. In Novosphingobium aromaticivorans (strain ATCC 700278 / DSM 12444 / CCUG 56034 / CIP 105152 / NBRC 16084 / F199), this protein is Elongation factor G.